Here is a 131-residue protein sequence, read N- to C-terminus: Small ribosomal subunit protein uS8 (131 aa).

It belongs to the universal ribosomal protein uS8 family. As to quaternary structure, part of the 30S ribosomal subunit. Contacts proteins S5 and S12.

One of the primary rRNA binding proteins, it binds directly to 16S rRNA central domain where it helps coordinate assembly of the platform of the 30S subunit. The polypeptide is Small ribosomal subunit protein uS8 (Wolinella succinogenes (strain ATCC 29543 / DSM 1740 / CCUG 13145 / JCM 31913 / LMG 7466 / NCTC 11488 / FDC 602W) (Vibrio succinogenes)).